A 414-amino-acid chain; its full sequence is MSGMLGLSAVMGKRPKQQVTARPRKCPIEKPEEIPDDLLIDVFSRLSIEDVARCRCLSRFWSSILRRRYFTELFHKMSSTRPRILFTFLYYGKRLFYSMPQDLDPSNHYSPLPYFSISYSPISAHYQMHFPKVLGASAKVCPPILGLICCKSSKTMIFNPSTRESKFISTTKRVGVKSTSFGYDPIDKLFKVLSMSDDFVCRVSTLGTEVVTWRTVECSVPHHPLHSEICMDGVLYYLARRVGDETPKPYMVAAFEVRLERFKFLPMDLRCKHIGCSAVIDYKGKLAVVWLNVDRDNQRHIESFELRVLNDVDEVKWSQIIYELPNYWNNLPADIDVSIVGMTSAGEIVLATSHIRHPFYIFYYSTVTLAIVQLRIDFGIEAPEANHCSTMSTFVNHVENVELACGLGLSSIAM.

The interval 1 to 24 is disordered; that stretch reads MSGMLGLSAVMGKRPKQQVTARPR. The F-box domain occupies 28–77; the sequence is IEKPEEIPDDLLIDVFSRLSIEDVARCRCLSRFWSSILRRRYFTELFHKM.

This is F-box protein At3g47030 from Arabidopsis thaliana (Mouse-ear cress).